We begin with the raw amino-acid sequence, 330 residues long: Aspartate--ammonia ligase (330 aa).

The protein belongs to the class-II aminoacyl-tRNA synthetase family. AsnA subfamily.

The protein localises to the cytoplasm. The enzyme catalyses L-aspartate + NH4(+) + ATP = L-asparagine + AMP + diphosphate + H(+). The protein operates within amino-acid biosynthesis; L-asparagine biosynthesis; L-asparagine from L-aspartate (ammonia route): step 1/1. The polypeptide is Aspartate--ammonia ligase (Yersinia pseudotuberculosis serotype O:1b (strain IP 31758)).